The following is a 361-amino-acid chain: Lipoyl synthase 1, chloroplastic (361 aa).

The [4Fe-4S] cluster site is built by Cys87, Cys92, Cys98, Cys124, Cys128, Cys131, and Ser339. Residues 107–328 (GEGDGIATAT…KEYGESVGFR (222 aa)) enclose the Radical SAM core domain.

It belongs to the radical SAM superfamily. Lipoyl synthase family. It depends on [4Fe-4S] cluster as a cofactor.

The protein localises to the plastid. Its subcellular location is the chloroplast. It catalyses the reaction [[Fe-S] cluster scaffold protein carrying a second [4Fe-4S](2+) cluster] + N(6)-octanoyl-L-lysyl-[protein] + 2 oxidized [2Fe-2S]-[ferredoxin] + 2 S-adenosyl-L-methionine + 4 H(+) = [[Fe-S] cluster scaffold protein] + N(6)-[(R)-dihydrolipoyl]-L-lysyl-[protein] + 4 Fe(3+) + 2 hydrogen sulfide + 2 5'-deoxyadenosine + 2 L-methionine + 2 reduced [2Fe-2S]-[ferredoxin]. The protein operates within protein modification; protein lipoylation via endogenous pathway; protein N(6)-(lipoyl)lysine from octanoyl-[acyl-carrier-protein]: step 2/2. Functionally, catalyzes the radical-mediated insertion of two sulfur atoms into the C-6 and C-8 positions of the octanoyl moiety bound to the lipoyl domains of lipoate-dependent enzymes, thereby converting the octanoylated domains into lipoylated derivatives. This Zea mays (Maize) protein is Lipoyl synthase 1, chloroplastic.